The chain runs to 258 residues: Putative cysteine-rich repeat secretory protein 61 (258 aa).

Positions 1–31 (MSSSFIPKRIALVLNLAMVAIQVFFIRSVSS) are cleaved as a signal peptide. Gnk2-homologous domains follow at residues 38 to 140 (YLYH…PTAF) and 146 to 253 (DKNK…IYPF).

Belongs to the cysteine-rich repeat secretory protein family.

The protein localises to the secreted. The polypeptide is Putative cysteine-rich repeat secretory protein 61 (CRRSP61) (Arabidopsis thaliana (Mouse-ear cress)).